Reading from the N-terminus, the 257-residue chain is Hydroxyacylglutathione hydrolase (257 aa).

Zn(2+) is bound by residues His-54, His-56, Asp-58, His-59, His-109, Asp-129, and His-167.

Belongs to the metallo-beta-lactamase superfamily. Glyoxalase II family. In terms of assembly, monomer. Zn(2+) is required as a cofactor.

It carries out the reaction an S-(2-hydroxyacyl)glutathione + H2O = a 2-hydroxy carboxylate + glutathione + H(+). It participates in secondary metabolite metabolism; methylglyoxal degradation; (R)-lactate from methylglyoxal: step 2/2. Its function is as follows. Thiolesterase that catalyzes the hydrolysis of S-D-lactoyl-glutathione to form glutathione and D-lactic acid. This chain is Hydroxyacylglutathione hydrolase, found in Marinomonas sp. (strain MWYL1).